Reading from the N-terminus, the 329-residue chain is Isopenicillin N synthase (329 aa).

Isopenicillin N-binding residues include Arg87, Tyr91, and Tyr189. N-[(5S)-5-amino-5-carboxypentanoyl]-L-cysteinyl-D-valine contacts are provided by Arg87, Tyr91, Tyr189, His212, and Asp214. The region spanning 180–286 is the Fe2OG dioxygenase domain; it reads TLSAVTLIHY…RLSLPFFLHA (107 aa). Residues His212, Asp214, and His268 each contribute to the Fe(2+) site. A 2-oxoglutarate-binding site is contributed by Arg277. Ser279 contributes to the isopenicillin N binding site. Ser279 is a binding site for N-[(5S)-5-amino-5-carboxypentanoyl]-L-cysteinyl-D-valine.

The protein belongs to the iron/ascorbate-dependent oxidoreductase family. The cofactor is Fe cation. Requires L-ascorbate as cofactor.

It carries out the reaction N-[(5S)-5-amino-5-carboxypentanoyl]-L-cysteinyl-D-valine + O2 = isopenicillin N + 2 H2O. It functions in the pathway antibiotic biosynthesis; penicillin G biosynthesis; penicillin G from L-alpha-aminoadipate and L-cysteine and L-valine: step 2/3. Removes, in the presence of oxygen, 4 hydrogen atoms from delta-L-(alpha-aminoadipyl)-L-cysteinyl-D-valine (ACV) to form the azetidinone and thiazolidine rings of isopenicillin. In Streptomyces griseus, this protein is Isopenicillin N synthase (pcbC).